We begin with the raw amino-acid sequence, 490 residues long: Cytochrome P450 71A25 (490 aa).

A helical membrane pass occupies residues 1–21 (MMMMIILLWSIIFMTILFLKK). Residue C431 participates in heme binding.

Belongs to the cytochrome P450 family. Requires heme as cofactor.

The protein localises to the membrane. In Arabidopsis thaliana (Mouse-ear cress), this protein is Cytochrome P450 71A25 (CYP71A25).